A 563-amino-acid polypeptide reads, in one-letter code: Beta-catenin-like protein 1 (563 aa).

Residue methionine 1 is modified to N-acetylmethionine. The tract at residues 1 to 49 (MDVGELLSYQPNRGTKRPRDDEEEELKMRRRQAGTRERGRYREEEMTVV) is disordered. A Nuclear localization signal motif is present at residues 16–33 (KRPRDDEEEELKMRRRQA). Residues 34–45 (GTRERGRYREEE) are compositionally biased toward basic and acidic residues. 2 HEAT repeats span residues 79 to 129 (ESSV…VVAT) and 134 to 176 (YHLL…TLHE). Lysine 91 is modified (N6-acetyllysine). The short motif at 130–140 (MPDLYHLLVEL) is the Nuclear export signal (NES) element. ARM repeat units follow at residues 178 to 228 (EEGA…MAEF), 229 to 273 (RPEM…LQDN), 274 to 323 (DENR…CLML), 325 to 363 (SNRE…AMIG), and 364 to 417 (PEGT…LLRN). Serine 389 bears the Phosphoserine mark. The stretch at 476–540 (DIEDEFYLRR…HIIKEYAENI (65 aa)) forms a coiled coil. Serine 545 is modified (phosphoserine).

As to quaternary structure, component of the PRP19-CDC5L splicing complex composed of a core complex comprising a homotetramer of PRPF19, CDC5L, PLRG1 and BCAS2, and at least three less stably associated proteins CTNNBL1, CWC15 and HSPA8. Interacts directly with CWC15 and CDC5L in the complex. Interacts with AICDA; the interaction is important for the antibody diversification activity of AICDA. Interacts with PRPF31 (via its NLS). Interacts (via its N-terminal NLS) with KPNA1 and KPNA2.

Its subcellular location is the nucleus. Component of the PRP19-CDC5L complex that forms an integral part of the spliceosome and is required for activating pre-mRNA splicing. Participates in AID/AICDA-mediated somatic hypermutation (SHM) and class-switch recombination (CSR), 2 processes resulting in the production of high-affinity, mutated isotype-switched antibodies. This is Beta-catenin-like protein 1 (CTNNBL1) from Bos taurus (Bovine).